The following is a 444-amino-acid chain: MRGVIPNYHHSYTLFFFVILVLFPHVFSTNTLSPNEALTISSNKTLVSPGDVFELGFFKTTTRNSPDGTDRWYLGIWYKTTSGHRTYVWVANRDNALHNSMGTLKISHASLVLLDHSNTPVWSTNFTGVAHLPVTAELLANGNFVLRDSKTNDLDRFMWQSFDYPVDTLLPEMKLGRNLIGSENEKILTSWKSPTDPSSGDFSFILETEGFLHEFYLLKNEFKVYRTGPWNGVRFNGIPKMQNWSYIDNSFIDNNEEVAYSFQVNNNHNIHTRFRMSSTGYLQVITWTKTVPQRNMFWSFPEDTCDLYKVCGPYAYCDMHTSPTCNCIKGFVPKNAGRWDLRDMSGGCVRSSKLSCGEGDGFLRMSQMKLPETSEAVVDKRIGLKECREKCVRDCNCTGYANMDIMNGGSGCVMWTGELDDMRKYNAGGQDLYVKVAAASLVPS.

The signal sequence occupies residues 1-28 (MRGVIPNYHHSYTLFFFVILVLFPHVFS). Residues 31–159 (TLSPNEALTI…KTNDLDRFMW (129 aa)) enclose the Bulb-type lectin domain. N-linked (GlcNAc...) asparagine glycans are attached at residues N43, N125, N243, and N396. Residues 356-437 (CGEGDGFLRM…GGQDLYVKVA (82 aa)) enclose the PAN domain. Cystine bridges form between C387-C412 and C395-C397.

Stigma.

Functionally, involved in sporophytic self-incompatibility system (the inability of flowering plants to achieve self-fertilization). The polypeptide is S-locus-specific glycoprotein (SLSG) (Brassica oleracea var. alboglabra (Chinese kale)).